The following is a 234-amino-acid chain: Peptidase E (234 aa).

Catalysis depends on charge relay system residues S123, D138, and H160.

It belongs to the peptidase S51 family.

The protein resides in the cytoplasm. The catalysed reaction is Dipeptidase E catalyzes the hydrolysis of dipeptides Asp-|-Xaa. It does not act on peptides with N-terminal Glu, Asn or Gln, nor does it cleave isoaspartyl peptides.. Hydrolyzes dipeptides containing N-terminal aspartate residues. May play a role in allowing the cell to use peptide aspartate to spare carbon otherwise required for the synthesis of the aspartate family of amino acids. The polypeptide is Peptidase E (Pasteurella multocida (strain Pm70)).